Here is a 333-residue protein sequence, read N- to C-terminus: Torsin-1A (333 aa).

Residues 1 to 20 (MKLGRATLALLLLVPCVVRA) form the signal peptide. The tract at residues 92-252 (KPKKPLTLSL…VSVFNNKNSG (161 aa)) is interaction with SNAPIN. 2 N-linked (GlcNAc...) asparagine glycosylation sites follow: N144 and N159. An interaction with KLC1 region spans residues 252-333 (GFWHSSLIDR…FTKLDYYLDD (82 aa)). Positions 313–333 (KVFSDKGCKTVFTKLDYYLDD) are interaction with SYNE3.

The protein belongs to the ClpA/ClpB family. Torsin subfamily. In terms of assembly, homohexamer. Interacts with TOR1B; the interaction may be specific of neural tissues. Interacts (ATP-bound) with TOR1AIP1 and TOR1AIP2; the interactions induce ATPase activity. Interacts with KLHL14; preferentially when ATP-free. Interacts with KLC1 (via TPR repeats); the interaction associates TOR1A with the kinesin oligomeric complex. Interacts with COPS4; the interaction associates TOR1A with the CSN complex. Interacts with SNAPIN; the interaction is direct and associates SNAPIN with the CSN complex. Interacts with STON2. Interacts (ATP-bound) with SYNE3 (via KASH domain); the interaction is required for SYNE3 nuclear envelope localization. Interacts with VIM; the interaction associates TOR1A with the cytoskeleton. Interacts with PLEC. Interacts (ATP-bound) with SLC6A3; regulates SLC6A3 transport to the plasma membrane. In terms of processing, N-glycosylated. In terms of tissue distribution, expressed in brain (at protein level).

The protein resides in the endoplasmic reticulum lumen. It is found in the nucleus inner membrane. The protein localises to the cell projection. Its subcellular location is the growth cone. It localises to the cytoplasmic vesicle membrane. The protein resides in the cytoplasmic vesicle. It is found in the secretory vesicle. The protein localises to the synaptic vesicle. The catalysed reaction is ATP + H2O = ADP + phosphate + H(+). Functionally, protein with chaperone functions important for the control of protein folding, processing, stability and localization as well as for the reduction of misfolded protein aggregates. Involved in the regulation of synaptic vesicle recycling, controls STON2 protein stability in collaboration with the COP9 signalosome complex (CSN). In the nucleus, may link the cytoskeleton with the nuclear envelope, this mechanism seems to be crucial for the control of nuclear polarity, cell movement and, specifically in neurons, nuclear envelope integrity. Participates in the cellular trafficking and may regulate the subcellular location of multipass membrane proteins such as the dopamine transporter SLC6A3, leading to the modulation of dopamine neurotransmission. In the endoplasmic reticulum, plays a role in the quality control of protein folding by increasing clearance of misfolded proteins such as SGCE variants or holding them in an intermediate state for proper refolding. May have a redundant function with TOR1B in non-neural tissues. This Rattus norvegicus (Rat) protein is Torsin-1A (Tor1a).